The following is a 386-amino-acid chain: WD repeat-containing protein 89 (386 aa).

6 WD repeats span residues 21–65 (KEPT…VIRE), 68–106 (GYPG…GKPV), 111–155 (GYPS…QDLS), 167–207 (THSD…EDDA), 213–253 (NSVS…TDEP), and 318–357 (GHAA…KTFT).

The protein is WD repeat-containing protein 89 (WDR89) of Bos taurus (Bovine).